A 102-amino-acid chain; its full sequence is NADH-quinone oxidoreductase subunit K (102 aa).

3 helical membrane-spanning segments follow: residues 6–26 (LEHG…GVMV), 30–50 (LLFM…AFVL), and 62–82 (IMFI…LAIV).

It belongs to the complex I subunit 4L family. NDH-1 is composed of 14 different subunits. Subunits NuoA, H, J, K, L, M, N constitute the membrane sector of the complex.

It is found in the cell inner membrane. The catalysed reaction is a quinone + NADH + 5 H(+)(in) = a quinol + NAD(+) + 4 H(+)(out). In terms of biological role, NDH-1 shuttles electrons from NADH, via FMN and iron-sulfur (Fe-S) centers, to quinones in the respiratory chain. The immediate electron acceptor for the enzyme in this species is believed to be ubiquinone. Couples the redox reaction to proton translocation (for every two electrons transferred, four hydrogen ions are translocated across the cytoplasmic membrane), and thus conserves the redox energy in a proton gradient. This Acinetobacter baylyi (strain ATCC 33305 / BD413 / ADP1) protein is NADH-quinone oxidoreductase subunit K.